The primary structure comprises 438 residues: Serine hydroxymethyltransferase (438 aa).

Residues L133 and 137–139 (GHL) contribute to the (6S)-5,6,7,8-tetrahydrofolate site. K242 carries the N6-(pyridoxal phosphate)lysine modification.

This sequence belongs to the SHMT family. As to quaternary structure, homodimer. Requires pyridoxal 5'-phosphate as cofactor.

The protein resides in the cytoplasm. The enzyme catalyses (6R)-5,10-methylene-5,6,7,8-tetrahydrofolate + glycine + H2O = (6S)-5,6,7,8-tetrahydrofolate + L-serine. It functions in the pathway one-carbon metabolism; tetrahydrofolate interconversion. Its pathway is amino-acid biosynthesis; glycine biosynthesis; glycine from L-serine: step 1/1. Catalyzes the reversible interconversion of serine and glycine with tetrahydrofolate (THF) serving as the one-carbon carrier. This reaction serves as the major source of one-carbon groups required for the biosynthesis of purines, thymidylate, methionine, and other important biomolecules. Also exhibits THF-independent aldolase activity toward beta-hydroxyamino acids, producing glycine and aldehydes, via a retro-aldol mechanism. This Brucella melitensis biotype 2 (strain ATCC 23457) protein is Serine hydroxymethyltransferase.